The chain runs to 107 residues: Iron-sulfur cluster assembly protein CyaY (107 aa).

It belongs to the frataxin family.

Its function is as follows. Involved in iron-sulfur (Fe-S) cluster assembly. May act as a regulator of Fe-S biogenesis. This chain is Iron-sulfur cluster assembly protein CyaY, found in Enterobacter sp. (strain 638).